The following is a 1140-amino-acid chain: Probable DNA-directed RNA polymerase II subunit RPB2 homolog (1140 aa).

Asp773 contacts Mg(2+). Zn(2+) contacts are provided by Cys1092, Cys1095, Cys1105, and Cys1108. The C4-type zinc finger occupies 1092–1108 (CKDCGMMSSTSKKCHHC).

Belongs to the RNA polymerase beta chain family.

It carries out the reaction RNA(n) + a ribonucleoside 5'-triphosphate = RNA(n+1) + diphosphate. Functionally, component of the DNA-dependent RNA polymerase that catalyzes the transcription of DNA into RNA using the four ribonucleoside triphosphates as substrates. Second largest component of RNA polymerase II which synthesizes mRNA precursors and many functional non-coding RNAs. Proposed to contribute to the polymerase catalytic activity and forms the polymerase active center together with the largest subunit. In Invertebrate iridescent virus 3 (IIV-3), this protein is Probable DNA-directed RNA polymerase II subunit RPB2 homolog.